Here is a 490-residue protein sequence, read N- to C-terminus: GTPase Der (490 aa).

2 EngA-type G domains span residues 3–166 and 200–373; these read PVVA…AEAM and IKLA…DSAT. GTP contacts are provided by residues 9-16, 56-60, 118-121, 206-213, 253-257, and 318-321; these read GRPNVGKS, DTGGI, NKVD, GKPNVGKS, DTAGV, and NKWD. Residues 374-458 enclose the KH-like domain; that stretch reads RRVSTSMLTR…PIQIRFQDGG (85 aa).

It belongs to the TRAFAC class TrmE-Era-EngA-EngB-Septin-like GTPase superfamily. EngA (Der) GTPase family. As to quaternary structure, associates with the 50S ribosomal subunit.

GTPase that plays an essential role in the late steps of ribosome biogenesis. This chain is GTPase Der, found in Shewanella piezotolerans (strain WP3 / JCM 13877).